The following is a 383-amino-acid chain: MLKYELLTTDGLARRGRMTLNHGVVETPIFMPVGTYGAVKAMSPAELKDIGAQIILGNTFHLWLRPGLEVMDAHKGLHGFNGWDKPILTDSGGFQVFSLGDLRKITEDGVTFASPINGDKLFLSPEISMQIQRRLNSDIVMQFDECTPYKIGDRPATEAEAAASMRMSLRWAQRSRNEFEREKNPNALFAIVQGGMFENLRDESLAGLQAIDADAGGEGFGGYAIGGLSVGEPKEDMMRVLQHVAPRLPADKPHYLMGVGTPEDLVAGVAAGVDMFDCVMPTRNARNGWLFTRFGDIKIKNAVHRNDPRPLDETCGCYTCSNFSRAYLHHLQRVGEILGARLNTIHNLYYYLELMAEMRTAIESHGFAAFQARFAADRARGAL.

Asp90 acts as the Proton acceptor in catalysis. Substrate-binding positions include 90-94 (DSGGF), Asp144, Gln193, and Gly227. Residues 258–264 (GVGTPED) are RNA binding. The Nucleophile role is filled by Asp277. Positions 282 to 286 (TRNAR) are RNA binding; important for wobble base 34 recognition. Residues Cys315, Cys317, Cys320, and His346 each coordinate Zn(2+).

It belongs to the queuine tRNA-ribosyltransferase family. As to quaternary structure, homodimer. Within each dimer, one monomer is responsible for RNA recognition and catalysis, while the other monomer binds to the replacement base PreQ1. It depends on Zn(2+) as a cofactor.

The enzyme catalyses 7-aminomethyl-7-carbaguanine + guanosine(34) in tRNA = 7-aminomethyl-7-carbaguanosine(34) in tRNA + guanine. It functions in the pathway tRNA modification; tRNA-queuosine biosynthesis. Catalyzes the base-exchange of a guanine (G) residue with the queuine precursor 7-aminomethyl-7-deazaguanine (PreQ1) at position 34 (anticodon wobble position) in tRNAs with GU(N) anticodons (tRNA-Asp, -Asn, -His and -Tyr). Catalysis occurs through a double-displacement mechanism. The nucleophile active site attacks the C1' of nucleotide 34 to detach the guanine base from the RNA, forming a covalent enzyme-RNA intermediate. The proton acceptor active site deprotonates the incoming PreQ1, allowing a nucleophilic attack on the C1' of the ribose to form the product. After dissociation, two additional enzymatic reactions on the tRNA convert PreQ1 to queuine (Q), resulting in the hypermodified nucleoside queuosine (7-(((4,5-cis-dihydroxy-2-cyclopenten-1-yl)amino)methyl)-7-deazaguanosine). The chain is Queuine tRNA-ribosyltransferase from Ralstonia pickettii (strain 12J).